The primary structure comprises 259 residues: 3-deoxy-manno-octulosonate cytidylyltransferase (259 aa).

Belongs to the KdsB family.

It is found in the cytoplasm. It catalyses the reaction 3-deoxy-alpha-D-manno-oct-2-ulosonate + CTP = CMP-3-deoxy-beta-D-manno-octulosonate + diphosphate. Its pathway is nucleotide-sugar biosynthesis; CMP-3-deoxy-D-manno-octulosonate biosynthesis; CMP-3-deoxy-D-manno-octulosonate from 3-deoxy-D-manno-octulosonate and CTP: step 1/1. The protein operates within bacterial outer membrane biogenesis; lipopolysaccharide biosynthesis. Its function is as follows. Activates KDO (a required 8-carbon sugar) for incorporation into bacterial lipopolysaccharide in Gram-negative bacteria. This chain is 3-deoxy-manno-octulosonate cytidylyltransferase, found in Maricaulis maris (strain MCS10) (Caulobacter maris).